We begin with the raw amino-acid sequence, 351 residues long: Holliday junction branch migration complex subunit RuvB (351 aa).

Residues 1–186 (MDEKIETRLI…FGIVQRLEFY (186 aa)) form a large ATPase domain (RuvB-L) region. ATP contacts are provided by residues Ile-25, Arg-26, Gly-67, Lys-70, Thr-71, Thr-72, 133-135 (EDF), Arg-176, Tyr-186, and Arg-223. Mg(2+) is bound at residue Thr-71. The segment at 187–257 (RIPDLIHIVK…IAKEALDLLN (71 aa)) is small ATPAse domain (RuvB-S). The head domain (RuvB-H) stretch occupies residues 260–351 (IRGLDVMDRK…ENFDLLGKVE (92 aa)). DNA contacts are provided by Arg-296, Arg-315, and Arg-320.

The protein belongs to the RuvB family. In terms of assembly, homohexamer. Forms an RuvA(8)-RuvB(12)-Holliday junction (HJ) complex. HJ DNA is sandwiched between 2 RuvA tetramers; dsDNA enters through RuvA and exits via RuvB. An RuvB hexamer assembles on each DNA strand where it exits the tetramer. Each RuvB hexamer is contacted by two RuvA subunits (via domain III) on 2 adjacent RuvB subunits; this complex drives branch migration. In the full resolvosome a probable DNA-RuvA(4)-RuvB(12)-RuvC(2) complex forms which resolves the HJ.

The protein resides in the cytoplasm. It catalyses the reaction ATP + H2O = ADP + phosphate + H(+). In terms of biological role, the RuvA-RuvB-RuvC complex processes Holliday junction (HJ) DNA during genetic recombination and DNA repair, while the RuvA-RuvB complex plays an important role in the rescue of blocked DNA replication forks via replication fork reversal (RFR). RuvA specifically binds to HJ cruciform DNA, conferring on it an open structure. The RuvB hexamer acts as an ATP-dependent pump, pulling dsDNA into and through the RuvAB complex. RuvB forms 2 homohexamers on either side of HJ DNA bound by 1 or 2 RuvA tetramers; 4 subunits per hexamer contact DNA at a time. Coordinated motions by a converter formed by DNA-disengaged RuvB subunits stimulates ATP hydrolysis and nucleotide exchange. Immobilization of the converter enables RuvB to convert the ATP-contained energy into a lever motion, pulling 2 nucleotides of DNA out of the RuvA tetramer per ATP hydrolyzed, thus driving DNA branch migration. The RuvB motors rotate together with the DNA substrate, which together with the progressing nucleotide cycle form the mechanistic basis for DNA recombination by continuous HJ branch migration. Branch migration allows RuvC to scan DNA until it finds its consensus sequence, where it cleaves and resolves cruciform DNA. The sequence is that of Holliday junction branch migration complex subunit RuvB from Coxiella burnetii (strain CbuG_Q212) (Coxiella burnetii (strain Q212)).